Reading from the N-terminus, the 575-residue chain is Melatonin-related receptor (575 aa).

Residues 1–30 (MGRTLAVPTPYGCIGCKLPQPDYPPALIVF) lie on the Extracellular side of the membrane. The helical transmembrane segment at 31-51 (MFCAMVITIVVDLIGNSMVIL) threads the bilayer. The Cytoplasmic segment spans residues 52–64 (AVSKNKKLRNSGN). Residues 65 to 85 (VFVVSLSVADMLVAIYPYPLM) traverse the membrane as a helical segment. The Extracellular portion of the chain corresponds to 86-103 (LHAMAIGGWDLSKLQCQM). Cysteine 101 and cysteine 178 are oxidised to a cystine. A helical transmembrane segment spans residues 104–124 (VGFITGLSVVGSIFNIMAIAI). Over 125-143 (NRYCYICHSLQYERIFSVR) the chain is Cytoplasmic. A helical membrane pass occupies residues 144 to 164 (NTCIYLAVTWIMTVLAVLPNM). Topologically, residues 165 to 188 (YIGTIEYDPRTYTCIFNYVNNPAF) are extracellular. A helical transmembrane segment spans residues 189-209 (AVTIVCIHFVLPLLIVGFCYV). The Cytoplasmic segment spans residues 210–239 (KIWTKVLAARDPAGQNPDNQLAEVRNFLTM). The helical transmembrane segment at 240-260 (FVIFLLFAVCWCPINALTVLV) threads the bilayer. The Extracellular portion of the chain corresponds to 261 to 273 (AVNPKEMAGKIPN). The chain crosses the membrane as a helical span at residues 274–294 (WVYLAAYFIAYFNSCLNAVIY). At 295 to 575 (GVLNENFRRE…VDADSDEMAV (281 aa)) the chain is on the cytoplasmic side. 2 disordered regions span residues 368 to 421 (VPLP…TVYP) and 446 to 474 (SSHP…TGYT). Positions 455–474 (PSKTAISPATSFPKPTTGYT) are enriched in polar residues.

Belongs to the G-protein coupled receptor 1 family. As to quaternary structure, homodimer, and heterodimer with MTNR1A and MTNR1B. Interacts with KAT5. Interacts with RTN4 isoform A/NOGO-A. Interacts with TGFBR1.

Its subcellular location is the cell membrane. G protein-coupled receptor that plays a role in numerous physiological processes including regulation of energy metabolism, neurite outgrowth or cell migration. Promotes self-renewal and neuronal differentiation of neural progenitor cells through activation of the NOTCH and WNT/beta-catenin signaling pathways. Modulates the KAT5-dependent glucocorticoid receptor signaling by modulating KAT5 subcellular compartmentalisation. Also plays a role in the activation TGFBR1 in the absence of TGFBR2 by interfering with FKBP1A binding to TGFBR1, leading to induction of both canonical and non-canonical SMAD signaling pathways resulting in inhibition of proliferation or promotion of migration. The polypeptide is Melatonin-related receptor (GPR50) (Ovis aries (Sheep)).